The sequence spans 228 residues: Ribosomal RNA large subunit methyltransferase E (228 aa).

S-adenosyl-L-methionine-binding residues include Gly76, Trp78, Asp99, Asp115, and Asp139. Lys179 acts as the Proton acceptor in catalysis.

The protein belongs to the class I-like SAM-binding methyltransferase superfamily. RNA methyltransferase RlmE family.

The protein localises to the cytoplasm. The catalysed reaction is uridine(2552) in 23S rRNA + S-adenosyl-L-methionine = 2'-O-methyluridine(2552) in 23S rRNA + S-adenosyl-L-homocysteine + H(+). In terms of biological role, specifically methylates the uridine in position 2552 of 23S rRNA at the 2'-O position of the ribose in the fully assembled 50S ribosomal subunit. In Bradyrhizobium diazoefficiens (strain JCM 10833 / BCRC 13528 / IAM 13628 / NBRC 14792 / USDA 110), this protein is Ribosomal RNA large subunit methyltransferase E.